The following is a 480-amino-acid chain: Vacuolar amino acid transporter 2 (480 aa).

Residues 21-48 are disordered; that stretch reads LTNFPFPGTTDNDSDDGSQGQNSLNIIT. Polar residues predominate over residues 37–46; sequence GSQGQNSLNI. 9 helical membrane-spanning segments follow: residues 72–92, 95–115, 145–165, 214–234, 263–283, 297–317, 338–358, 394–414, and 447–467; these read AFMNLANSILGAGIITQPFAI, AGILGGLLSYVALGFIVDWTL, LILFTNGLFAFGGCIGYCIII, LSKASFLAVISMIIIVLTVVI, LSVISFALVCHHNTSFIFFSM, ISIIISVICCALMGYSGFAVF, IARLCFGFNMLTTFPMEIFVL, VFITMGISLTTCNLGALFELI, and FYLCICFGFMIMIISSTQTII.

This sequence belongs to the amino acid/polyamine transporter 2 family.

Its subcellular location is the vacuole membrane. Its function is as follows. Probable amino acid transporter of unknown specificity. This chain is Vacuolar amino acid transporter 2 (AVT2), found in Saccharomyces cerevisiae (strain ATCC 204508 / S288c) (Baker's yeast).